The primary structure comprises 426 residues: Serine--tRNA ligase (426 aa).

Residue 233-235 participates in L-serine binding; the sequence is TAE. 264 to 266 contributes to the ATP binding site; sequence RSE. Glu-287 is a binding site for L-serine. ATP is bound at residue 351-354; sequence EISS. Residue Ser-387 participates in L-serine binding.

It belongs to the class-II aminoacyl-tRNA synthetase family. Type-1 seryl-tRNA synthetase subfamily. As to quaternary structure, homodimer. The tRNA molecule binds across the dimer.

The protein localises to the cytoplasm. It catalyses the reaction tRNA(Ser) + L-serine + ATP = L-seryl-tRNA(Ser) + AMP + diphosphate + H(+). It carries out the reaction tRNA(Sec) + L-serine + ATP = L-seryl-tRNA(Sec) + AMP + diphosphate + H(+). The protein operates within aminoacyl-tRNA biosynthesis; selenocysteinyl-tRNA(Sec) biosynthesis; L-seryl-tRNA(Sec) from L-serine and tRNA(Sec): step 1/1. In terms of biological role, catalyzes the attachment of serine to tRNA(Ser). Is also able to aminoacylate tRNA(Sec) with serine, to form the misacylated tRNA L-seryl-tRNA(Sec), which will be further converted into selenocysteinyl-tRNA(Sec). The protein is Serine--tRNA ligase of Pseudomonas savastanoi pv. phaseolicola (strain 1448A / Race 6) (Pseudomonas syringae pv. phaseolicola (strain 1448A / Race 6)).